Reading from the N-terminus, the 448-residue chain is Binary larvicide subunit BinB (448 aa).

The segment at 19–200 (TNYPLNTTPT…FVNSSFYAAA (182 aa)) is beta-trefoil domain. Cysteines 67 and 161 form a disulfide. Residues 226-407 (PKDAVRAVKG…APITNPLTLT (182 aa)) form a probable pore-forming domain region.

Belongs to the toxin_10 family. Forms a heterodimer with BinA. Post-translationally, processed by proteases extracted from mosquito larval gut.

Its subcellular location is the spore. The protein resides in the perispore. Its function is as follows. Component of a binary toxin active against Culex and some Aedes mosquito larvae. This subunit is responsible for localized binding to specific regions of the host larval gut. The individual subunits are not toxic. BinAB and this subunit alone bind to the gastric caecum and posterior midgut of C.quinquefasciatus larvae. Binary toxin internalization into host gut cells requires both proteins. Does not bind to the midgut of Aedes aegypti. Toxic to Aedes atropalpus mosquito larvae; mortality towards both C.quinquefasciatus and A.atropalpus is maximal by 48 hours. A.aegypti is not very susceptible to this toxin. Binding component of binary toxin. The 51 kDa polypeptide acts synergetically with the 42 kDa polypeptide for expression of a larvicidal toxin. This Lysinibacillus sphaericus (Bacillus sphaericus) protein is Binary larvicide subunit BinB.